The primary structure comprises 285 residues: Complex I assembly factor TIMMDC1, mitochondrial (285 aa).

A run of 4 helical transmembrane segments spans residues 80–100 (AAVS…FIYA), 137–159 (RWSW…LTVY), 165–185 (MSHF…NLGV), and 188–208 (LVAG…LLMA). Positions 265–285 (RIEELLSLPRNPSSPHQQSKH) are disordered. Positions 274–285 (RNPSSPHQQSKH) are enriched in polar residues. Ser-277 is subject to Phosphoserine.

It belongs to the Tim17/Tim22/Tim23 family. In terms of assembly, associates with the intermediate 315 kDa subcomplex of incompletely assembled complex I. Interacts with TMEM70.

It localises to the mitochondrion membrane. In terms of biological role, chaperone protein involved in the assembly of the mitochondrial NADH:ubiquinone oxidoreductase complex (complex I). Participates in constructing the membrane arm of complex I. The sequence is that of Complex I assembly factor TIMMDC1, mitochondrial from Mus musculus (Mouse).